The following is a 597-amino-acid chain: Uptake hydrogenase large subunit (597 aa).

The Ni(2+) site is built by C75, C78, C576, and C579.

It belongs to the [NiFe]/[NiFeSe] hydrogenase large subunit family. As to quaternary structure, heterodimer of a large and a small subunit. Requires Ni(2+) as cofactor.

The protein localises to the cell membrane. The catalysed reaction is H2 + A = AH2. In terms of biological role, this enzyme recycles the H(2) produced by nitrogenase to increase the production of ATP and to protect nitrogenase against inhibition or damage by O(2) under carbon- or phosphate-limited conditions. The sequence is that of Uptake hydrogenase large subunit (hupB) from Rhodobacter capsulatus (Rhodopseudomonas capsulata).